The chain runs to 301 residues: Glycine--tRNA ligase alpha subunit (301 aa).

Belongs to the class-II aminoacyl-tRNA synthetase family. As to quaternary structure, tetramer of two alpha and two beta subunits.

It localises to the cytoplasm. It carries out the reaction tRNA(Gly) + glycine + ATP = glycyl-tRNA(Gly) + AMP + diphosphate. The chain is Glycine--tRNA ligase alpha subunit from Actinobacillus pleuropneumoniae serotype 5b (strain L20).